The following is a 250-amino-acid chain: Exotoxin type A (250 aa).

An N-terminal signal peptide occupies residues 1-30; that stretch reads MENNKEVLKKMVFFVLMKFLGLTILPKGIC. The cysteines at positions 117 and 128 are disulfide-linked.

It belongs to the staphylococcal/streptococcal toxin family.

Causative agent of the symptoms associated with scarlet fever, have been associated with streptococcal toxic shock-like disease and may play a role in the early events of rheumatic fever. The chain is Exotoxin type A (speA) from Streptococcus pyogenes.